Here is a 494-residue protein sequence, read N- to C-terminus: U3 small nucleolar RNA-associated protein 15 (494 aa).

WD repeat units follow at residues 37-76 (KEYS…VKKT), 79-118 (RFKD…ILRA), 121-161 (AHQF…VQYD), 164-202 (GHED…PEVM), 205-243 (SHGE…QTPT), 248-287 (NHQK…VVHG), and 289-328 (KYSG…QTSS).

Component of the ribosomal small subunit (SSU) processome.

It is found in the nucleus. It localises to the nucleolus. Functionally, involved in nucleolar processing of pre-18S ribosomal RNA. Required for optimal pre-ribosomal RNA transcription by RNA polymerase I together with a subset of U3 proteins required for transcription (t-UTPs). The polypeptide is U3 small nucleolar RNA-associated protein 15 (utp15) (Schizosaccharomyces pombe (strain 972 / ATCC 24843) (Fission yeast)).